A 293-amino-acid polypeptide reads, in one-letter code: NAD kinase (293 aa).

Asp72 functions as the Proton acceptor in the catalytic mechanism. NAD(+) is bound by residues 72–73, 146–147, Arg157, Arg174, Asp176, 187–192, and Gln247; these read DG, ND, and TAYALS.

Belongs to the NAD kinase family. It depends on a divalent metal cation as a cofactor.

It localises to the cytoplasm. The enzyme catalyses NAD(+) + ATP = ADP + NADP(+) + H(+). Involved in the regulation of the intracellular balance of NAD and NADP, and is a key enzyme in the biosynthesis of NADP. Catalyzes specifically the phosphorylation on 2'-hydroxyl of the adenosine moiety of NAD to yield NADP. In Teredinibacter turnerae (strain ATCC 39867 / T7901), this protein is NAD kinase.